Reading from the N-terminus, the 44-residue chain is uncharacterized protein (44 aa).

An N-terminal signal peptide occupies residues 1 to 28; the sequence is MLRDLGRRVAIAAILSGIILGGMSISLA.

This is an uncharacterized protein from Bacillus subtilis (strain 168).